The primary structure comprises 115 residues: Putative gamma-glutamylcyclotransferase VC_2546 (115 aa).

Residue 8-11 coordinates substrate; that stretch reads YGTL. The active-site Proton acceptor is E73.

It belongs to the gamma-glutamylcyclotransferase family.

In terms of biological role, putative gamma-glutamylcyclotransferase. The polypeptide is Putative gamma-glutamylcyclotransferase VC_2546 (Vibrio cholerae serotype O1 (strain ATCC 39315 / El Tor Inaba N16961)).